Reading from the N-terminus, the 345-residue chain is MDDNRKKALTAALSQIERQFGKGAVMRMGEQPREIIPSVSTGSLGLDIALGIGGLPYGRIVEIYGPESSGKTTLTLQVIAEAQRQGKTCAFVDAEHALDPIYAEKLGVNIDQLLVSQPDTGEQALEIADMLVRSGAVDVIIIDSVAALTPKAEIEGEMGDSHVGLQARLMSQALRKLTGSVKQANCLMIFINQIRMKIGVMFGSPETTTGGNALKFYASVRLDIRRVGSVKEGEEVVGNETRVKVVKNKVSPPFKQADFQIMYGRGIYRTGEIIDLGVKEGFVDKSGAWYSYKGDKIGQGKANSSRYLEEHPEIAVEIETAIREKLMPKTPVKEKEAPVAPVEAE.

An ATP-binding site is contributed by 65-72; sequence GPESSGKT.

It belongs to the RecA family.

Its subcellular location is the cytoplasm. In terms of biological role, can catalyze the hydrolysis of ATP in the presence of single-stranded DNA, the ATP-dependent uptake of single-stranded DNA by duplex DNA, and the ATP-dependent hybridization of homologous single-stranded DNAs. It interacts with LexA causing its activation and leading to its autocatalytic cleavage. This chain is Protein RecA, found in Hahella chejuensis (strain KCTC 2396).